Here is a 549-residue protein sequence, read N- to C-terminus: Eukaryotic translation initiation factor 3 subunit D-2 (549 aa).

Residues 107–157 (ARVKGRSGRGPGMLGVAGSMAGGGTTSGSTKYGKGRESRRNQGRRFARNAP) are disordered. The span at 114–132 (GRGPGMLGVAGSMAGGGTT) shows a compositional bias: gly residues. The tract at residues 288 to 302 (QFDLLTVNETSLEPP) is RNA gate. The segment at 527–549 (NSFDSDAEDEENSSEPFANSLDN) is disordered. The segment covering 529-539 (FDSDAEDEENS) has biased composition (acidic residues).

The protein belongs to the eIF-3 subunit D family. Component of the eukaryotic translation initiation factor 3 (eIF-3) complex. The eIF-3 complex interacts with pix.

The protein localises to the cytoplasm. Its function is as follows. mRNA cap-binding component of the eukaryotic translation initiation factor 3 (eIF-3) complex, which is involved in protein synthesis of a specialized repertoire of mRNAs and, together with other initiation factors, stimulates binding of mRNA and methionyl-tRNAi to the 40S ribosome. The eIF-3 complex specifically targets and initiates translation of a subset of mRNAs involved in cell proliferation. In the eIF-3 complex, eif3d specifically recognizes and binds the 7-methylguanosine cap of a subset of mRNAs. The chain is Eukaryotic translation initiation factor 3 subunit D-2 from Drosophila ananassae (Fruit fly).